A 765-amino-acid polypeptide reads, in one-letter code: Membrane metallo-endopeptidase-like 1 (765 aa).

Residues 1–19 (MVERAGWCRKKSPGFVEYG) are Cytoplasmic-facing. A helical; Signal-anchor for type II membrane protein transmembrane segment spans residues 20 to 40 (LMVLLLLLLGAIVTLGVFYSI). Over 41 to 765 (GKQLPLLTSL…MHPMKRCRIW (725 aa)) the chain is Lumenal. Residues 74–765 (ICTTPSCVIA…MHPMKRCRIW (692 aa)) form the Peptidase M13 domain. 5 disulfide bridges follow: C75-C80, C98-C750, C106-C710, C161-C425, and C636-C762. Position 121 (R121) interacts with a peptide. Residues N163, N279, N303, and N336 are each glycosylated (N-linked (GlcNAc...) asparagine). Residues 523–549 (FENGLQNLKNNAQRSLKKLREKVDQNL) are a coiled coil. Residue H599 participates in Zn(2+) binding. E600 is a catalytic residue. Positions 603 and 662 each coordinate Zn(2+). D666 functions as the Proton donor in the catalytic mechanism. N694 carries an N-linked (GlcNAc...) asparagine glycan.

Belongs to the peptidase M13 family. It depends on Zn(2+) as a cofactor. Post-translationally, N-glycosylated. As to expression, highly expressed in testis. Also expressed in ovary. Weakly or not expressed in brain, lung, heart, liver, kidney, adrenal gland and intestine.

The protein localises to the membrane. Its subcellular location is the secreted. It catalyses the reaction Preferential cleavage of polypeptides between hydrophobic residues, particularly with Phe or Tyr at P1'.. Inhibited by thiorphan and phosphoramidon. Metalloprotease involved in sperm function, possibly by modulating the processes of fertilization and early embryonic development. Degrades a broad variety of small peptides with a preference for peptides shorter than 3 kDa containing neutral bulky aliphatic or aromatic amino acid residues. Shares the same substrate specificity with MME and cleaves peptides at the same amide bond. The sequence is that of Membrane metallo-endopeptidase-like 1 (Mmel1) from Mus musculus (Mouse).